A 121-amino-acid polypeptide reads, in one-letter code: Large ribosomal subunit protein bL12 (121 aa).

This sequence belongs to the bacterial ribosomal protein bL12 family. In terms of assembly, homodimer. Part of the ribosomal stalk of the 50S ribosomal subunit. Forms a multimeric L10(L12)X complex, where L10 forms an elongated spine to which 2 to 4 L12 dimers bind in a sequential fashion. Binds GTP-bound translation factors.

In terms of biological role, forms part of the ribosomal stalk which helps the ribosome interact with GTP-bound translation factors. Is thus essential for accurate translation. The polypeptide is Large ribosomal subunit protein bL12 (Xanthomonas euvesicatoria pv. vesicatoria (strain 85-10) (Xanthomonas campestris pv. vesicatoria)).